Consider the following 264-residue polypeptide: 4-hydroxy-tetrahydrodipicolinate reductase (264 aa).

8–13 (GPRGKM) is a binding site for NAD(+). Position 36 (Lys-36) interacts with NADP(+). Residues 97 to 99 (GTT) and 123 to 126 (APNF) each bind NAD(+). His-153 (proton donor/acceptor) is an active-site residue. His-154 is a (S)-2,3,4,5-tetrahydrodipicolinate binding site. Lys-157 functions as the Proton donor in the catalytic mechanism. A (S)-2,3,4,5-tetrahydrodipicolinate-binding site is contributed by 163 to 164 (GT).

The protein belongs to the DapB family.

Its subcellular location is the cytoplasm. It carries out the reaction (S)-2,3,4,5-tetrahydrodipicolinate + NAD(+) + H2O = (2S,4S)-4-hydroxy-2,3,4,5-tetrahydrodipicolinate + NADH + H(+). The catalysed reaction is (S)-2,3,4,5-tetrahydrodipicolinate + NADP(+) + H2O = (2S,4S)-4-hydroxy-2,3,4,5-tetrahydrodipicolinate + NADPH + H(+). The protein operates within amino-acid biosynthesis; L-lysine biosynthesis via DAP pathway; (S)-tetrahydrodipicolinate from L-aspartate: step 4/4. Catalyzes the conversion of 4-hydroxy-tetrahydrodipicolinate (HTPA) to tetrahydrodipicolinate. The sequence is that of 4-hydroxy-tetrahydrodipicolinate reductase from Halalkalibacterium halodurans (strain ATCC BAA-125 / DSM 18197 / FERM 7344 / JCM 9153 / C-125) (Bacillus halodurans).